We begin with the raw amino-acid sequence, 376 residues long: Crh-like protein 4 (376 aa).

Positions Met-1–Ala-21 are cleaved as a signal peptide. Residues Gln-22–Asn-229 form the GH16 domain. The cysteines at positions 27 and 35 are disulfide-linked. The Nucleophile role is filled by Glu-119. The active-site Proton donor is Glu-123. Residues Glu-123, Lys-202, Trp-206, and Thr-217 each contribute to the chitin site. A lipid anchor (GPI-anchor amidated serine) is attached at Ser-346. Residues Ala-347–Pro-376 constitute a propeptide, removed in mature form. N-linked (GlcNAc...) asparagine glycosylation occurs at Asn-351.

It belongs to the glycosyl hydrolase 16 family. CRH1 subfamily.

The protein localises to the cell membrane. It catalyses the reaction Random endo-hydrolysis of N-acetyl-beta-D-glucosaminide (1-&gt;4)-beta-linkages in chitin and chitodextrins.. In terms of biological role, dual chitinase/transglycosylase that plays a role in cell wall architecture. Chitinase and transglycosylase activities are coupled. Required for the polysaccharide cross-linking at the septa and the cell wall. More specifically, transfers chitin to 1,6-beta-glucan in the cell wall. This is Crh-like protein 4 from Botryotinia fuckeliana (strain B05.10) (Noble rot fungus).